The sequence spans 693 residues: Elongation factor G (693 aa).

One can recognise a tr-type G domain in the interval 8–282 (EKTRNIGIMA…AVIDYLPSPL (275 aa)). GTP-binding positions include 17–24 (AHVDAGKT), 81–85 (DTPGH), and 135–138 (NKMD).

It belongs to the TRAFAC class translation factor GTPase superfamily. Classic translation factor GTPase family. EF-G/EF-2 subfamily.

The protein resides in the cytoplasm. Catalyzes the GTP-dependent ribosomal translocation step during translation elongation. During this step, the ribosome changes from the pre-translocational (PRE) to the post-translocational (POST) state as the newly formed A-site-bound peptidyl-tRNA and P-site-bound deacylated tRNA move to the P and E sites, respectively. Catalyzes the coordinated movement of the two tRNA molecules, the mRNA and conformational changes in the ribosome. In Streptococcus gordonii (strain Challis / ATCC 35105 / BCRC 15272 / CH1 / DL1 / V288), this protein is Elongation factor G.